The sequence spans 623 residues: V-type proton ATPase catalytic subunit A (623 aa).

252-259 (GAFGCGKT) provides a ligand contact to ATP.

This sequence belongs to the ATPase alpha/beta chains family. In terms of assembly, V-ATPase is a heteromultimeric enzyme composed of a peripheral catalytic V1 complex (main components: subunits A, B, C, D, E, and F) attached to an integral membrane V0 proton pore complex (main component: the proteolipid protein).

The enzyme catalyses ATP + H2O + 4 H(+)(in) = ADP + phosphate + 5 H(+)(out). Its function is as follows. Catalytic subunit of the peripheral V1 complex of vacuolar ATPase. V-ATPase vacuolar ATPase is responsible for acidifying a variety of intracellular compartments in eukaryotic cells. This chain is V-type proton ATPase catalytic subunit A, found in Vigna radiata var. radiata (Mung bean).